We begin with the raw amino-acid sequence, 338 residues long: S-adenosylmethionine:tRNA ribosyltransferase-isomerase (338 aa).

Belongs to the QueA family. In terms of assembly, monomer.

The protein localises to the cytoplasm. It carries out the reaction 7-aminomethyl-7-carbaguanosine(34) in tRNA + S-adenosyl-L-methionine = epoxyqueuosine(34) in tRNA + adenine + L-methionine + 2 H(+). It functions in the pathway tRNA modification; tRNA-queuosine biosynthesis. Transfers and isomerizes the ribose moiety from AdoMet to the 7-aminomethyl group of 7-deazaguanine (preQ1-tRNA) to give epoxyqueuosine (oQ-tRNA). The polypeptide is S-adenosylmethionine:tRNA ribosyltransferase-isomerase (Francisella tularensis subsp. mediasiatica (strain FSC147)).